The following is a 76-amino-acid chain: Omega/kappa-hexatoxin-Ar1g (76 aa).

The N-terminal stretch at 1–22 (MNTATGFIVLLVLATVLGGIEA) is a signal peptide. Positions 23–35 (GESHMRKDAMGRV) are excised as a propeptide. 3 cysteine pairs are disulfide-bonded: cysteine 40/cysteine 55, cysteine 47/cysteine 60, and cysteine 54/cysteine 74.

This sequence belongs to the neurotoxin 08 (Shiva) family. 02 (omega/kappa toxin) subfamily. Expressed by the venom gland.

It localises to the secreted. In terms of biological role, toxin that may inhibit ion channels. The polypeptide is Omega/kappa-hexatoxin-Ar1g (Atrax robustus (Sydney funnel-web spider)).